Here is a 557-residue protein sequence, read N- to C-terminus: 2-succinyl-5-enolpyruvyl-6-hydroxy-3-cyclohexene-1-carboxylate synthase (557 aa).

It belongs to the TPP enzyme family. MenD subfamily. Homodimer. Mg(2+) serves as cofactor. The cofactor is Mn(2+). It depends on thiamine diphosphate as a cofactor.

The enzyme catalyses isochorismate + 2-oxoglutarate + H(+) = 5-enolpyruvoyl-6-hydroxy-2-succinyl-cyclohex-3-ene-1-carboxylate + CO2. It participates in quinol/quinone metabolism; 1,4-dihydroxy-2-naphthoate biosynthesis; 1,4-dihydroxy-2-naphthoate from chorismate: step 2/7. The protein operates within quinol/quinone metabolism; menaquinone biosynthesis. In terms of biological role, catalyzes the thiamine diphosphate-dependent decarboxylation of 2-oxoglutarate and the subsequent addition of the resulting succinic semialdehyde-thiamine pyrophosphate anion to isochorismate to yield 2-succinyl-5-enolpyruvyl-6-hydroxy-3-cyclohexene-1-carboxylate (SEPHCHC). This is 2-succinyl-5-enolpyruvyl-6-hydroxy-3-cyclohexene-1-carboxylate synthase from Phocaeicola vulgatus (strain ATCC 8482 / DSM 1447 / JCM 5826 / CCUG 4940 / NBRC 14291 / NCTC 11154) (Bacteroides vulgatus).